Here is a 493-residue protein sequence, read N- to C-terminus: Galactose-1-phosphate uridylyltransferase (493 aa).

The protein belongs to the galactose-1-phosphate uridylyltransferase type 2 family.

Its subcellular location is the cytoplasm. The catalysed reaction is alpha-D-galactose 1-phosphate + UDP-alpha-D-glucose = alpha-D-glucose 1-phosphate + UDP-alpha-D-galactose. It functions in the pathway carbohydrate metabolism; galactose metabolism. In Lactococcus lactis subsp. cremoris (strain MG1363), this protein is Galactose-1-phosphate uridylyltransferase.